A 53-amino-acid polypeptide reads, in one-letter code: Large ribosomal subunit protein bL32c (53 aa).

It belongs to the bacterial ribosomal protein bL32 family.

It is found in the plastid. The protein localises to the chloroplast. This Phaseolus vulgaris (Kidney bean) protein is Large ribosomal subunit protein bL32c.